Reading from the N-terminus, the 425-residue chain is 3-isopropylmalate dehydratase large subunit (425 aa).

Residues cysteine 305, cysteine 365, and cysteine 368 each coordinate [4Fe-4S] cluster.

It belongs to the aconitase/IPM isomerase family. LeuC type 2 subfamily. As to quaternary structure, heterodimer of LeuC and LeuD. Requires [4Fe-4S] cluster as cofactor.

It catalyses the reaction (2R,3S)-3-isopropylmalate = (2S)-2-isopropylmalate. It functions in the pathway amino-acid biosynthesis; L-leucine biosynthesis; L-leucine from 3-methyl-2-oxobutanoate: step 2/4. Its function is as follows. Catalyzes the isomerization between 2-isopropylmalate and 3-isopropylmalate, via the formation of 2-isopropylmaleate. This Clostridioides difficile (strain 630) (Peptoclostridium difficile) protein is 3-isopropylmalate dehydratase large subunit.